The following is a 298-amino-acid chain: Acetylglutamate kinase (298 aa).

Residues 69 to 70 (GG), R91, and N191 contribute to the substrate site.

Belongs to the acetylglutamate kinase family. ArgB subfamily.

It is found in the cytoplasm. The enzyme catalyses N-acetyl-L-glutamate + ATP = N-acetyl-L-glutamyl 5-phosphate + ADP. Its pathway is amino-acid biosynthesis; L-arginine biosynthesis; N(2)-acetyl-L-ornithine from L-glutamate: step 2/4. Catalyzes the ATP-dependent phosphorylation of N-acetyl-L-glutamate. This is Acetylglutamate kinase from Neisseria meningitidis serogroup C (strain 053442).